The sequence spans 475 residues: Methyltransferase-like protein 25B (475 aa).

Residues 186 to 210 (QRLVERAQRLDQELLQTLEKEEKRN) are a coiled coil. Residues 406 to 426 (VVAFFSLALLLAPLVETLILL) traverse the membrane as a helical segment.

It belongs to the METTL25 family.

It localises to the membrane. In Bos taurus (Bovine), this protein is Methyltransferase-like protein 25B.